The chain runs to 417 residues: Dibenzothiophene monooxygenase (417 aa).

Residues 19–125 are helical N-terminus; sequence DPVAVARGLA…LYTQIAQNNW (107 aa). FMN is bound by residues Y96, 129-134, 159-163, R282, 369-370, and H391; these read NASSEN, KHFCS, and AR. The tract at residues 126 to 234 is central beta-barrel N-terminus; sequence WTGNASSENN…VEPDEVLGAP (109 aa). The interval 131-142 is lid loop; it reads SSENNSHELDVK. Positions 235–409 are helical C-terminus; the sequence is NAFVLAFIQS…DVGKHTLNGQ (175 aa).

The protein belongs to the DszC flavin monooxygenase family. As to quaternary structure, homotetramer.

The protein resides in the cytoplasm. It carries out the reaction dibenzothiophene + 2 FMNH2 + 2 O2 = dibenzothiophene 5,5-dioxide + 2 FMN + 2 H2O + 2 H(+). The catalysed reaction is dibenzothiophene + FMNH2 + O2 = dibenzothiophene 5-oxide + FMN + H2O + H(+). It catalyses the reaction dibenzothiophene 5-oxide + FMNH2 + O2 = dibenzothiophene 5,5-dioxide + FMN + H2O + H(+). It functions in the pathway sulfur metabolism; dibenzothiophene degradation. Its function is as follows. Catalyzes the first step of the '4S' desulfurization pathway that removes covalently bound sulfur from dibenzothiophene (DBT) without breaking carbon-carbon bonds. Sulfur dioxygenase which converts DBT to DBT-sulfone (DBTO2 or DBT 5,5-dioxide) in a stepwise manner. The sequence is that of Dibenzothiophene monooxygenase from Rhodococcus erythropolis (Arthrobacter picolinophilus).